We begin with the raw amino-acid sequence, 194 residues long: Ferredoxin, apicoplast (194 aa).

The N-terminal 19 residues, 1 to 19 (MNIVILLLILTFSIKHSNT), are a transit peptide targeting the apicoplast. The region spanning 99–189 (YNITLRTNDG…DCVIETHKED (91 aa)) is the 2Fe-2S ferredoxin-type domain. The [2Fe-2S] cluster site is built by C135, C140, C143, and C173.

It belongs to the 2Fe2S plant-type ferredoxin family. [2Fe-2S] cluster is required as a cofactor.

Its subcellular location is the plastid. It is found in the apicoplast. Ferredoxins are iron-sulfur proteins that transfer electrons in a wide variety of metabolic reactions. By transferring electrons to 4-hydroxy-3-methylbut-2-enyl diphosphate reductase LytB/IspH, plays a role in the terminal step of the DOXP/MEP pathway for isoprenoid precursor biosynthesis. The sequence is that of Ferredoxin, apicoplast from Plasmodium falciparum (isolate 3D7).